Consider the following 197-residue polypeptide: Putative peptidyl-prolyl cis-trans isomerase (197 aa).

Residues 14–195 enclose the PPIase cyclophilin-type domain; that stretch reads NEIKVVMHTN…YDVVIESIDV (182 aa).

Belongs to the cyclophilin-type PPIase family.

The enzyme catalyses [protein]-peptidylproline (omega=180) = [protein]-peptidylproline (omega=0). In terms of biological role, PPIases accelerate the folding of proteins. It catalyzes the cis-trans isomerization of proline imidic peptide bonds in oligopeptides. The chain is Putative peptidyl-prolyl cis-trans isomerase from Staphylococcus epidermidis (strain ATCC 35984 / DSM 28319 / BCRC 17069 / CCUG 31568 / BM 3577 / RP62A).